The sequence spans 349 residues: tRNA pseudouridine synthase D (349 aa).

Phe-27 contacts substrate. Asp-80 (nucleophile) is an active-site residue. Position 129 (Asn-129) interacts with substrate. Residues 155–303 form the TRUD domain; the sequence is GVPNYFGAQR…VEAARRAMLL (149 aa). Residue Phe-329 coordinates substrate.

Belongs to the pseudouridine synthase TruD family.

It catalyses the reaction uridine(13) in tRNA = pseudouridine(13) in tRNA. Functionally, responsible for synthesis of pseudouridine from uracil-13 in transfer RNAs. The protein is tRNA pseudouridine synthase D of Escherichia coli O45:K1 (strain S88 / ExPEC).